The sequence spans 117 residues: MSLSSPGVHLFYHSRWQGTRVLDELCWGLEEQGVPCRAICCDDHDCALALGKLAAKSSTLRVGLGLNATGDIALTHAQLPEDRALVCGHTRAGTAQIRTLGANAGQLVKVLPFSEIK.

Position 31 (Glu-31) interacts with Mg(2+).

The protein belongs to the DdrB/PduH family. As to quaternary structure, member of the GDR complex, probably composed of DhaF(2)/DhaG(2). The cofactor is Mg(2+).

Its function is as follows. Small subunit of the glycerol dehydratase-reactivating factor (GDR), which reactivates suicidally inhibited adenosylcobalamin-dependent glycerol dehydratase. This chain is Probable glycerol dehydratase-reactivating factor small subunit, found in Citrobacter freundii.